The primary structure comprises 207 residues: Large ribosomal subunit protein uL4 (207 aa).

A disordered region spans residues 44–78 (LRQGTHKTKTRSEVRGGGRKPWRQKGTGRARQGSI). Basic residues predominate over residues 60 to 71 (GGRKPWRQKGTG).

This sequence belongs to the universal ribosomal protein uL4 family. Part of the 50S ribosomal subunit.

One of the primary rRNA binding proteins, this protein initially binds near the 5'-end of the 23S rRNA. It is important during the early stages of 50S assembly. It makes multiple contacts with different domains of the 23S rRNA in the assembled 50S subunit and ribosome. Its function is as follows. Forms part of the polypeptide exit tunnel. The polypeptide is Large ribosomal subunit protein uL4 (Halalkalibacterium halodurans (strain ATCC BAA-125 / DSM 18197 / FERM 7344 / JCM 9153 / C-125) (Bacillus halodurans)).